The following is a 34-amino-acid chain: Hemopexin (34 aa).

The tract at residues 1 to 25 (RPLTQHKPHTPGDEHPHGAEPPGXD) is disordered.

This sequence belongs to the hemopexin family. As to expression, expressed by the liver and secreted in plasma.

It is found in the secreted. Functionally, binds heme and transports it to the liver for breakdown and iron recovery, after which the free hemopexin returns to the circulation. The sequence is that of Hemopexin (HPX) from Gallus gallus (Chicken).